A 469-amino-acid polypeptide reads, in one-letter code: uncharacterized protein (469 aa).

A signal peptide spans 1–19 (MRINFVLLITLILPWFVSG). 7 helical membrane-spanning segments follow: residues 199 to 219 (IKSTLLAISMFLGFITLTWLL), 236 to 256 (AFWVFIFVFTHSYQVYSMVAI), 283 to 303 (AYTSFLLVLCFGLGITKPALV), 305 to 325 (YYVYLAFVAFVQGLFVTFAPL), 338 to 358 (ILLKLIWNIYTFVYYGLPFFA), 386 to 406 (IALAAVTVSNCLFLGVVRPLL), and 413 to 433 (GFQLITSCITFVDFLVFAFLF).

The protein resides in the membrane. This is an uncharacterized protein from Schizosaccharomyces pombe (strain 972 / ATCC 24843) (Fission yeast).